A 288-amino-acid polypeptide reads, in one-letter code: MRIIVPATSANIGPGFDSIGVALSKYLIIEVLEESTEWLVEHNLVNIPKDHTNLLIQTALHVKSDLAPHRLKMFSDIPLARGLGSSSSVIVAGIELANQLGNLALSQKEKLEIATRLEGHPDNVAPAIFGDLVISSIVKNDIKSLEVMFPDSSFIAFIPNYELKTSDSRNVLPQKLSYEDAVASSSVANVMVASLLKGDLVTAGWAIERDLFHERYRQPLVKEFEVIKQISTQNGAYATYLSGAGPTVMVLCSKEKEQAIVTELSKLCLGGQIQVLNIERKGVRVEKR.

78–88 (PLARGLGSSSS) provides a ligand contact to ATP.

It belongs to the GHMP kinase family. Homoserine kinase subfamily.

The protein localises to the cytoplasm. It carries out the reaction L-homoserine + ATP = O-phospho-L-homoserine + ADP + H(+). It functions in the pathway amino-acid biosynthesis; L-threonine biosynthesis; L-threonine from L-aspartate: step 4/5. Catalyzes the ATP-dependent phosphorylation of L-homoserine to L-homoserine phosphate. In Streptococcus agalactiae serotype V (strain ATCC BAA-611 / 2603 V/R), this protein is Homoserine kinase.